A 224-amino-acid polypeptide reads, in one-letter code: Iron-sulfur cluster repair protein ScdA (224 aa).

This sequence belongs to the RIC family. ScdA subfamily. As to quaternary structure, homodimer.

It is found in the cytoplasm. Its function is as follows. Di-iron-containing protein involved in the repair of iron-sulfur clusters damaged by oxidative and nitrosative stress conditions. The sequence is that of Iron-sulfur cluster repair protein ScdA from Staphylococcus epidermidis (strain ATCC 35984 / DSM 28319 / BCRC 17069 / CCUG 31568 / BM 3577 / RP62A).